A 512-amino-acid chain; its full sequence is Probable cobyric acid synthase (512 aa).

The GATase cobBQ-type domain maps to Ser-275–Ala-460. Cys-353 acts as the Nucleophile in catalysis. His-452 is an active-site residue.

This sequence belongs to the CobB/CobQ family. CobQ subfamily.

It participates in cofactor biosynthesis; adenosylcobalamin biosynthesis. In terms of biological role, catalyzes amidations at positions B, D, E, and G on adenosylcobyrinic A,C-diamide. NH(2) groups are provided by glutamine, and one molecule of ATP is hydrogenolyzed for each amidation. The chain is Probable cobyric acid synthase from Halobacterium salinarum (strain ATCC 29341 / DSM 671 / R1).